Here is a 558-residue protein sequence, read N- to C-terminus: MEIILFLTMMVMITYVFSGYLYRVALVQSSRVDLIFTRFENMCFKIIGTDLEHMSAKTYVKHFLAFNGFMGFITFVLLIVQQWLFLNPNHNLNQSIDLAFNTAISFLTNSNLQHYNGESDVTYLTQMIVMTYLMFTSSASGYAVCIAMLRRLTGLTNIIGNFYQDIVRFIVRVLLPLSCLISILLMTQGVPQTLHANLMIRTLSGHIQHIAFGPIASLESIKHLGTNGGGFLAGNSATPFENPNIWSNFIEMGSMMLLPMSMLFLFGRMLSRHGKRVHRHALILFVAMFFIFIAILTLTMWSEYRGNPILANLGIYGPNMEGKEVRFGAGLSALFTVITTAFTTGSVNNMHDSLTPLGGLGPMVLMMLNVVFGGEGVGLMNLLIYVLLTVFICSLMVGKTPEYLNMPIGAREMKCIVLVFLIHPILILVFSALAFMIPGASESITNPSFHGISQVMYEMTSAAANNGSGFEGLKDDTTFWNISTGIIMLLSRYIPIILQLMIASSLVNKKSYHQDKYTIAIDKPYFGVSLIVFIVLLSGLTFIPVLLLGPIGEFLTLK.

A run of 12 helical transmembrane segments spans residues 1–21, 66–86, 127–147, 166–186, 245–265, 281–301, 327–347, 354–374, 377–397, 416–436, 482–502, and 531–551; these read MEIILFLTMMVMITYVFSGYL, FNGFMGFITFVLLIVQQWLFL, MIVMTYLMFTSSASGYAVCIA, IVRFIVRVLLPLSCLISILLM, IWSNFIEMGSMMLLPMSMLFL, ALILFVAMFFIFIAILTLTMW, FGAGLSALFTVITTAFTTGSV, LTPLGGLGPMVLMMLNVVFGG, VGLMNLLIYVLLTVFICSLMV, IVLVFLIHPILILVFSALAFM, ISTGIIMLLSRYIPIILQLMI, and IVFIVLLSGLTFIPVLLLGPI.

The protein belongs to the KdpA family. The system is composed of three essential subunits: KdpA, KdpB and KdpC.

It is found in the cell membrane. Functionally, part of the high-affinity ATP-driven potassium transport (or Kdp) system, which catalyzes the hydrolysis of ATP coupled with the electrogenic transport of potassium into the cytoplasm. This subunit binds the extracellular potassium ions and delivers the ions to the membrane domain of KdpB through an intramembrane tunnel. The polypeptide is Potassium-transporting ATPase potassium-binding subunit (Staphylococcus aureus (strain MSSA476)).